The primary structure comprises 188 residues: Elongation factor P (188 aa).

The protein belongs to the elongation factor P family.

The protein resides in the cytoplasm. Its pathway is protein biosynthesis; polypeptide chain elongation. Its function is as follows. Involved in peptide bond synthesis. Stimulates efficient translation and peptide-bond synthesis on native or reconstituted 70S ribosomes in vitro. Probably functions indirectly by altering the affinity of the ribosome for aminoacyl-tRNA, thus increasing their reactivity as acceptors for peptidyl transferase. This chain is Elongation factor P, found in Rickettsia africae (strain ESF-5).